The following is a 239-amino-acid chain: MRPSNRTPEQNREIKITRHYTDYAEGSVLIEMGNTKVLCNASVSGSVPRFLKGKGKGWVTAEYAMLPRATHIRNMREAAKGKQGGRTLEIQRLIARSLRAAVDLNALGENMITVDCDVIQADGGTRTAAITGGCIALADALNWMVKKGKLKKSPLKQMIAAVSVGIYQGTPVCDLDYAEDSNAETDTNVVMTESGGLIEIQATAEDGAFSHEQLLSMLSLAKGGIEALVVEQKKALNAE.

Phosphate is bound by residues arginine 86 and 124–126 (GTR).

The protein belongs to the RNase PH family. As to quaternary structure, homohexameric ring arranged as a trimer of dimers.

The catalysed reaction is tRNA(n+1) + phosphate = tRNA(n) + a ribonucleoside 5'-diphosphate. Its function is as follows. Phosphorolytic 3'-5' exoribonuclease that plays an important role in tRNA 3'-end maturation. Removes nucleotide residues following the 3'-CCA terminus of tRNAs; can also add nucleotides to the ends of RNA molecules by using nucleoside diphosphates as substrates, but this may not be physiologically important. Probably plays a role in initiation of 16S rRNA degradation (leading to ribosome degradation) during starvation. In Psychromonas ingrahamii (strain DSM 17664 / CCUG 51855 / 37), this protein is Ribonuclease PH.